The sequence spans 229 residues: uncharacterized protein (229 aa).

Residues 1 to 17 (MKKIIALMLFLTFFAHA) form the signal peptide.

This is an uncharacterized protein from Escherichia coli O157:H7.